The chain runs to 231 residues: MADLENKTVKANVENKPGAAKTQSVSAPKRTESGAKKQIWEKRSAHDSKDMPKKSVDRANKVKNRTRFGEANNEFSEKVVNISRVTKVVKGGRRFSFSAFVVVGDKKGKVGFGHGKANEVPDAIKKAVKDARNHLISVPIQNKITVPHEIHAKFLASKVMLKPAPKGKGIVASGTVRAVVELAGYTDIYTKTYGSRSKANIVRATLKALQQLRTPEQIAEIRDKDVKDLLG.

Residues methionine 1–lysine 63 are disordered. Residues lysine 29–asparagine 60 show a composition bias toward basic and acidic residues. The region spanning phenylalanine 75 to valine 138 is the S5 DRBM domain.

This sequence belongs to the universal ribosomal protein uS5 family. Part of the 30S ribosomal subunit. Contacts proteins S4 and S8.

In terms of biological role, with S4 and S12 plays an important role in translational accuracy. Located at the back of the 30S subunit body where it stabilizes the conformation of the head with respect to the body. The polypeptide is Small ribosomal subunit protein uS5 (Mycoplasmopsis agalactiae (strain NCTC 10123 / CIP 59.7 / PG2) (Mycoplasma agalactiae)).